Here is a 362-residue protein sequence, read N- to C-terminus: Probable dual-specificity RNA methyltransferase RlmN (362 aa).

Glu-99 (proton acceptor) is an active-site residue. The Radical SAM core domain occupies 105-341; the sequence is SPDRHTVCVS…VTVRKSQGAS (237 aa). A disulfide bridge links Cys-112 with Cys-346. [4Fe-4S] cluster is bound by residues Cys-119, Cys-123, and Cys-126. S-adenosyl-L-methionine-binding positions include 171–172, Ser-204, 227–229, and Asn-303; these read GE and SLH. Catalysis depends on Cys-346, which acts as the S-methylcysteine intermediate.

Belongs to the radical SAM superfamily. RlmN family. Requires [4Fe-4S] cluster as cofactor.

The protein localises to the cytoplasm. The catalysed reaction is adenosine(2503) in 23S rRNA + 2 reduced [2Fe-2S]-[ferredoxin] + 2 S-adenosyl-L-methionine = 2-methyladenosine(2503) in 23S rRNA + 5'-deoxyadenosine + L-methionine + 2 oxidized [2Fe-2S]-[ferredoxin] + S-adenosyl-L-homocysteine. It carries out the reaction adenosine(37) in tRNA + 2 reduced [2Fe-2S]-[ferredoxin] + 2 S-adenosyl-L-methionine = 2-methyladenosine(37) in tRNA + 5'-deoxyadenosine + L-methionine + 2 oxidized [2Fe-2S]-[ferredoxin] + S-adenosyl-L-homocysteine. Its function is as follows. Specifically methylates position 2 of adenine 2503 in 23S rRNA and position 2 of adenine 37 in tRNAs. The chain is Probable dual-specificity RNA methyltransferase RlmN from Chlorobium phaeobacteroides (strain BS1).